The following is a 232-amino-acid chain: Ureidoacrylate amidohydrolase RutB (232 aa).

Asp26 serves as the catalytic Proton acceptor. Residue Lys135 is part of the active site. Cys168 serves as the catalytic Nucleophile.

This sequence belongs to the isochorismatase family. RutB subfamily.

It catalyses the reaction (Z)-3-ureidoacrylate + H2O + H(+) = (Z)-3-aminoacrylate + NH4(+) + CO2. It carries out the reaction (Z)-3-ureidoacrylate + H2O = (Z)-3-aminoacrylate + carbamate + H(+). The catalysed reaction is (Z)-2-methylureidoacrylate + H2O + H(+) = (Z)-2-methylaminoacrylate + NH4(+) + CO2. Hydrolyzes ureidoacrylate to form aminoacrylate and carbamate. The carbamate hydrolyzes spontaneously, thereby releasing one of the nitrogen atoms of the pyrimidine ring as ammonia and one of its carbon atoms as CO2. This is Ureidoacrylate amidohydrolase RutB from Cronobacter sakazakii (strain ATCC BAA-894) (Enterobacter sakazakii).